A 716-amino-acid chain; its full sequence is Ubiquitin thioesterase zranb1-B (716 aa).

2 consecutive RanBP2-type zinc fingers follow at residues 3-33 and 82-111; these read DLGL…QRHN and TSSK…QRQQ. Zn(2+) contacts are provided by Cys-10, Cys-13, Cys-24, Cys-27, Cys-88, Cys-91, Cys-102, and Cys-105. Residues 113-143 are disordered; that stretch reads SQQHSPLSPSETPQTSGSRPSPVTSDPCEEY. Over residues 118 to 136 the composition is skewed to polar residues; sequence PLSPSETPQTSGSRPSPVT. Residues 152 to 181 form a RanBP2-type 3 zinc finger; sequence HAQRWPCSACTYENWPKSLRCVVCDHPKPS. Zn(2+)-binding residues include Cys-158, Cys-161, Cys-172, and Cys-175. The tract at residues 178–228 is disordered; sequence PKPSGSPETPQQDSEAESATSPSIVNEQERENVRTAGGGGGGSRGRLRKLS. Positions 183-203 are enriched in polar residues; that stretch reads SPETPQQDSEAESATSPSIVN. 2 ANK repeats span residues 268-298 and 321-348; these read RRSD…SGGD and FTLV…QQTA. The OTU domain occupies 440-600; it reads LYALWNRTAG…RGHFSALVAM (161 aa). The Nucleophile role is filled by Cys-451. Catalysis depends on His-593, which acts as the Proton acceptor.

Belongs to the peptidase C64 family.

It is found in the cytoplasm. It localises to the nucleus. It catalyses the reaction Thiol-dependent hydrolysis of ester, thioester, amide, peptide and isopeptide bonds formed by the C-terminal Gly of ubiquitin (a 76-residue protein attached to proteins as an intracellular targeting signal).. Ubiquitin thioesterase, which specifically hydrolyzes 'Lys-29'-linked and 'Lys-33'-linked diubiquitin. Also cleaves 'Lys-63'-linked chains, but with 40-fold less efficiency compared to 'Lys-29'-linked ones. Positive regulator of the Wnt signaling pathway that deubiquitinates apc protein, a negative regulator of Wnt-mediated transcription. Acts as a regulator of autophagy by mediating deubiquitination of pik3c3/vps34, thereby promoting autophagosome maturation. Plays a role in the regulation of cell morphology and cytoskeletal organization. Required in the stress fiber dynamics and cell migration. The protein is Ubiquitin thioesterase zranb1-B (zranb1b) of Danio rerio (Zebrafish).